A 196-amino-acid polypeptide reads, in one-letter code: Ribosome maturation factor RimP (196 aa).

Residues 176–196 (ETNFDEVSTELETDTPSEGDQ) are disordered. Residues 177-196 (TNFDEVSTELETDTPSEGDQ) show a composition bias toward acidic residues.

The protein belongs to the RimP family.

The protein localises to the cytoplasm. Functionally, required for maturation of 30S ribosomal subunits. In Roseobacter denitrificans (strain ATCC 33942 / OCh 114) (Erythrobacter sp. (strain OCh 114)), this protein is Ribosome maturation factor RimP.